The primary structure comprises 210 residues: Chaperone protein TorD (210 aa).

This sequence belongs to the TorD/DmsD family. TorD subfamily.

Its subcellular location is the cytoplasm. Its function is as follows. Involved in the biogenesis of TorA. Acts on TorA before the insertion of the molybdenum cofactor and, as a result, probably favors a conformation of the apoenzyme that is competent for acquiring the cofactor. This chain is Chaperone protein TorD, found in Salmonella dublin (strain CT_02021853).